The chain runs to 398 residues: cAMP-dependent protein kinase type 3 (398 aa).

Phosphoserine is present on residues Ser15 and Ser55. Positions 88–342 (FQILRTLGTG…SEDVKNHPWF (255 aa)) constitute a Protein kinase domain. ATP is bound by residues 94 to 102 (LGTGSFGRV) and Lys117. Asp211 (proton acceptor) is an active-site residue. Residues 343–398 (NEVIWEKLLARYIETPYEPPIQQGQGDTSQFDRYPEEEFNYGIQGEDPYMDLMKEF) form the AGC-kinase C-terminal domain.

Belongs to the protein kinase superfamily. AGC Ser/Thr protein kinase family. cAMP subfamily.

It catalyses the reaction L-seryl-[protein] + ATP = O-phospho-L-seryl-[protein] + ADP + H(+). The catalysed reaction is L-threonyl-[protein] + ATP = O-phospho-L-threonyl-[protein] + ADP + H(+). With respect to regulation, activated by cAMP. The protein is cAMP-dependent protein kinase type 3 (TPK3) of Saccharomyces cerevisiae (strain ATCC 204508 / S288c) (Baker's yeast).